Here is a 166-residue protein sequence, read N- to C-terminus: Large ribosomal subunit protein bL9 (166 aa).

Belongs to the bacterial ribosomal protein bL9 family.

In terms of biological role, binds to the 23S rRNA. This chain is Large ribosomal subunit protein bL9, found in Brachyspira hyodysenteriae (strain ATCC 49526 / WA1).